Here is a 417-residue protein sequence, read N- to C-terminus: GPI mannosyltransferase 2 (417 aa).

9 helical membrane passes run 10–30 (FLIINVTFFAVKLLQFGLVWL), 104–124 (IVLKAVSFNLLLHYLSTWIVY), 142–162 (LALTTSVLFILSSAAGFLISV), 167–187 (IAFTFSLLGMLFRQWSISFDV), 206–226 (FCFAFAFLNRSNCLLLGLFYV), 239–259 (ITSIFYPILSGTILFGVFVYF), 312–332 (IPNFLFGLPNIVITWNAITYF), 344–364 (YIWIARIFLFIMVFLANVQII), and 394–414 (YYVMWLLIWIPTQTALFACFL).

It belongs to the PIGV family.

It is found in the endoplasmic reticulum membrane. The protein operates within glycolipid biosynthesis; glycosylphosphatidylinositol-anchor biosynthesis. Its function is as follows. Mannosyltransferase involved in glycosylphosphatidylinositol-anchor biosynthesis. Transfers the second mannose to the glycosylphosphatidylinositol during GPI precursor assembly. This is GPI mannosyltransferase 2 (GPI18) from Kluyveromyces lactis (strain ATCC 8585 / CBS 2359 / DSM 70799 / NBRC 1267 / NRRL Y-1140 / WM37) (Yeast).